Reading from the N-terminus, the 366-residue chain is Peptide chain release factor 2 (366 aa).

Position 253 is an N5-methylglutamine (glutamine 253).

It belongs to the prokaryotic/mitochondrial release factor family. Methylated by PrmC. Methylation increases the termination efficiency of RF2.

It is found in the cytoplasm. Functionally, peptide chain release factor 2 directs the termination of translation in response to the peptide chain termination codons UGA and UAA. The sequence is that of Peptide chain release factor 2 (prfB) from Buchnera aphidicola subsp. Baizongia pistaciae (strain Bp).